Here is a 628-residue protein sequence, read N- to C-terminus: tRNA uridine 5-carboxymethylaminomethyl modification enzyme MnmG (628 aa).

13–18 (GAGHAG) serves as a coordination point for FAD. 273 to 287 (GPRYCPSIEDKIVRF) contacts NAD(+).

Belongs to the MnmG family. Homodimer. Heterotetramer of two MnmE and two MnmG subunits. The cofactor is FAD.

It localises to the cytoplasm. NAD-binding protein involved in the addition of a carboxymethylaminomethyl (cmnm) group at the wobble position (U34) of certain tRNAs, forming tRNA-cmnm(5)s(2)U34. The polypeptide is tRNA uridine 5-carboxymethylaminomethyl modification enzyme MnmG (Buchnera aphidicola subsp. Acyrthosiphon pisum (strain Tuc7)).